A 195-amino-acid polypeptide reads, in one-letter code: MSEKTSTVTIHYGNQRFPVAVNLNETLSELIDDLLETTEISEKKVKLFYAGKRLKDKKASLSKLGLKNHSKILCIRPHKQQRGSKEKDTVEPAPKAEAENPVFSRISGEIKAIDQYVDKELSPMYDNYVNKPSNDPKQKNKQKLMISELLLQQLLKLDGVDVLGSEKLRFERKQLVSKIQKMLDHVDQTSQEVAA.

One can recognise a Ubiquitin-like domain in the interval 6-72 (STVTIHYGNQ…KLGLKNHSKI (67 aa)). The tract at residues 78-98 (HKQQRGSKEKDTVEPAPKAEA) is disordered. The span at 83–98 (GSKEKDTVEPAPKAEA) shows a compositional bias: basic and acidic residues. Residues 109 to 190 (EIKAIDQYVD…KMLDHVDQTS (82 aa)) enclose the BAG domain.

Binds to the ATPase domain of HSP70/HSC chaperones.

Its function is as follows. Inhibits the chaperone activity of HSP70/HSC70 by promoting substrate release. The chain is BAG family molecular chaperone regulator 1A (bag101) from Schizosaccharomyces pombe (strain 972 / ATCC 24843) (Fission yeast).